The primary structure comprises 441 residues: Protein kinase C and casein kinase substrate in neurons protein 1 (441 aa).

A phosphoserine mark is found at Ser-2 and Ser-76. In terms of domain architecture, F-BAR spans 10–280 (EEITDSFWEV…AIRGADAQED (271 aa)). A coiled-coil region spans residues 23–272 (KRTVKRIDDG…HVYRELEQAI (250 aa)). Thr-181 carries the post-translational modification Phosphothreonine. The segment at 310–380 (AAKKEKQPKK…ANGGANPFED (71 aa)) is disordered. Positions 311-321 (AKKEKQPKKAE) are enriched in basic and acidic residues. A compositionally biased stretch (polar residues) spans 326-348 (SNATGAVESTSQAGDRGSVSSYD). Phosphoserine occurs at positions 343, 345, 346, 358, and 362. Residues 382–441 (AKGVRVRALYDYDGQEQDELSFKAGDELTKLGEEDEQGWCRGRLDSGQLGLYPANYVEAI) form the SH3 domain. Residue Tyr-391 is modified to Phosphotyrosine. Phosphoserine is present on residues Ser-402 and Ser-427.

It belongs to the PACSIN family. In terms of assembly, homodimer. May form heterooligomers with other PACSINs. Interacts with MAPT. Interacts with TRPV4. Interacts (via SH3 domain) with SYNJ1 and WASL. Interacts (via SH3 domain) with DNM1; the interaction is reduced by DNM1 phosphorylation. Interacts with DNM2 and DNM3. Interacts with both COBL and DBNL. Identified in a complex composed of COBL, PACSIN1 and WASL. Interacts with EHD1 and EHD3. In terms of processing, phosphorylated by casein kinase 2 (CK2) and protein kinase C (PKC). As to expression, highly expressed in brain (at protein level).

It is found in the cytoplasm. It localises to the cell projection. Its subcellular location is the synapse. The protein resides in the synaptosome. The protein localises to the ruffle membrane. It is found in the membrane. It localises to the cytoplasmic vesicle membrane. Its subcellular location is the cytosol. The protein resides in the cell membrane. Binds to membranes via its F-BAR domain and mediates membrane tubulation. Plays a role in the reorganization of the microtubule cytoskeleton via its interaction with MAPT; this decreases microtubule stability and inhibits MAPT-induced microtubule polymerization. Plays a role in cellular transport processes by recruiting DNM1, DNM2 and DNM3 to membranes. Plays a role in the reorganization of the actin cytoskeleton and in neuron morphogenesis via its interaction with COBL and WASL, and by recruiting COBL to the cell cortex. Plays a role in the regulation of neurite formation, neurite branching and the regulation of neurite length. Required for normal synaptic vesicle endocytosis; this process retrieves previously released neurotransmitters to accommodate multiple cycles of neurotransmission. Required for normal excitatory and inhibitory synaptic transmission. This Rattus norvegicus (Rat) protein is Protein kinase C and casein kinase substrate in neurons protein 1 (Pacsin1).